We begin with the raw amino-acid sequence, 327 residues long: uncharacterized protein (327 aa).

A signal peptide spans 1–24; it reads MKQPGFIRLATLALLSTLSFFSHG.

This is an uncharacterized protein from Salmonella typhimurium (strain LT2 / SGSC1412 / ATCC 700720).